A 193-amino-acid polypeptide reads, in one-letter code: Pre-histone-like nucleoprotein (193 aa).

The residue at position 2 (Ser2) is an N-acetylserine; by host. Positions Ser2–Gly24 are excised as a propeptide. Residue Lys48 is modified to N6-acetyllysine; by host. Residue Thr55 is modified to Phosphothreonine; by host. Positions Arg183 to Thr193 match the Nuclear localization signal motif.

Belongs to the adenoviridae histone-like nucleoprotein family. Interacts with the core-capsid bridging protein; this interaction bridges the virus core to the capsid. Interacts with host NPM1; this interaction might play a role in placing the pre-histone-like nucleoprotein on the viral DNA or regulating viral gene expression. Interacts with host HMGB1; this interaction inhibits host immune response. In terms of processing, cleaved near the N-terminus by the viral protease during virion maturation to form the mature protein.

The protein localises to the virion. The protein resides in the host nucleus. It localises to the host nucleolus. In terms of biological role, plays a role in the inhibition of host immune response within the nucleus. Interacts with cellular nucleosomes and immobilizes the host immune danger signal HMGB1 on chromatin. In turn, prevents HMGB1 release out of the cell and thus decreases inflammation. Also plays a role in the wrapping and condensation of the viral DNA. May also promote viral genome import into the nucleus. The sequence is that of Pre-histone-like nucleoprotein from Homo sapiens (Human).